A 249-amino-acid chain; its full sequence is 3-deoxy-D-manno-octulosonic acid kinase (249 aa).

The active site involves Asp175.

The protein belongs to the protein kinase superfamily. KdkA/RfaP family.

It localises to the cell inner membrane. It catalyses the reaction an alpha-Kdo-(2-&gt;6)-lipid IVA + ATP = a 4-O-phospho-alpha-Kdo-(2-&gt;6)-lipid IVA + ADP + H(+). It participates in bacterial outer membrane biogenesis; LPS core biosynthesis. Catalyzes the ATP-dependent phosphorylation of the 3-deoxy-D-manno-octulosonic acid (Kdo) residue in Kdo-lipid IV(A) at the 4-OH position. This is 3-deoxy-D-manno-octulosonic acid kinase from Xylella fastidiosa (strain M23).